Consider the following 349-residue polypeptide: tRNA N6-adenosine threonylcarbamoyltransferase (349 aa).

Residues histidine 111 and histidine 115 each coordinate Fe cation. Substrate-binding positions include 134–138 (LVSGG), aspartate 167, glycine 180, aspartate 184, and asparagine 279. Aspartate 307 contacts Fe cation.

Belongs to the KAE1 / TsaD family. Fe(2+) serves as cofactor.

It localises to the cytoplasm. The enzyme catalyses L-threonylcarbamoyladenylate + adenosine(37) in tRNA = N(6)-L-threonylcarbamoyladenosine(37) in tRNA + AMP + H(+). In terms of biological role, required for the formation of a threonylcarbamoyl group on adenosine at position 37 (t(6)A37) in tRNAs that read codons beginning with adenine. Is involved in the transfer of the threonylcarbamoyl moiety of threonylcarbamoyl-AMP (TC-AMP) to the N6 group of A37, together with TsaE and TsaB. TsaD likely plays a direct catalytic role in this reaction. This chain is tRNA N6-adenosine threonylcarbamoyltransferase, found in Nostoc punctiforme (strain ATCC 29133 / PCC 73102).